Consider the following 255-residue polypeptide: F-box/SPRY domain-containing protein 1 (255 aa).

The F-box domain maps to 3–51; it reads DRVAALCNYNVLEVVFSYLDLNDLGRCSQVCKSWFHFLNDENSDVWRFH. A B30.2/SPRY domain is found at 61 to 253; the sequence is TKSELLSPVP…VSMVYCGTPL (193 aa).

It belongs to the FBXO45/Fsn family. In terms of assembly, component of an E3 ubiquitin ligase complex composed of hiw and Fsn.

It is found in the synapse. Its pathway is protein modification; protein ubiquitination. Required in the presynaptic motoneuron to down-regulate the levels of wnd and restrain synaptic terminal growth at the neuromuscular junction (NMJ). This Drosophila persimilis (Fruit fly) protein is F-box/SPRY domain-containing protein 1.